A 336-amino-acid chain; its full sequence is MSEMYSAPVTVLGAGSYGTALAIALARNGHKTYLWGHQPEKMAVLATERMNNAFLPDIAFPDALEIESDLVQAIAKAKDILIVVPSHVFADVLKQIKPLLSAHHRIMWATKGLERNTGRLLQTVAQEILGNQYPLAVLSGPTFAKELAQGLPTAIALSSTDSQFADEMQQRIHCAKAFRVYLNNDMIGVQLGGAIKNVIAIGAGISDGMGFGANARTALITRGLAEISRLGASLGANANTFMGMAGLGDLVLTCTDNQSRNRRFGLMLGQGKSAEEAMAEIGQVVEGFYNTKEAYLLAQTQGVEMPIVEQIYQMLFCGKNAHDVATSLLGRERKGE.

Residues Ser-16, Tyr-17, His-37, and Lys-111 each contribute to the NADPH site. The sn-glycerol 3-phosphate site is built by Lys-111, Gly-140, and Thr-142. Ala-144 is an NADPH binding site. The sn-glycerol 3-phosphate site is built by Lys-196, Asp-249, Ser-259, Arg-260, and Asn-261. Lys-196 serves as the catalytic Proton acceptor. Arg-260 serves as a coordination point for NADPH. The NADPH site is built by Val-284 and Glu-286.

This sequence belongs to the NAD-dependent glycerol-3-phosphate dehydrogenase family.

It localises to the cytoplasm. It catalyses the reaction sn-glycerol 3-phosphate + NAD(+) = dihydroxyacetone phosphate + NADH + H(+). The catalysed reaction is sn-glycerol 3-phosphate + NADP(+) = dihydroxyacetone phosphate + NADPH + H(+). Its pathway is membrane lipid metabolism; glycerophospholipid metabolism. Its function is as follows. Catalyzes the reduction of the glycolytic intermediate dihydroxyacetone phosphate (DHAP) to sn-glycerol 3-phosphate (G3P), the key precursor for phospholipid synthesis. In Actinobacillus pleuropneumoniae serotype 5b (strain L20), this protein is Glycerol-3-phosphate dehydrogenase [NAD(P)+].